A 142-amino-acid polypeptide reads, in one-letter code: MPTPSMEDYIEKIYSLIETKGYARVSDIADELFVHPSSVTKMVQKLDKDEYLIYEKYRGLILTPKGTQMGKRLLERHALLESFLSIIGVDPSHIYHDVEGIEHHLSWNSIDRIGDVVQFFENHPDALKTLKAMETTKPETKE.

Positions 1-63 constitute an HTH dtxR-type domain; that stretch reads MPTPSMEDYI…YEKYRGLILT (63 aa). Mn(2+) is bound by residues Asp-8, Glu-11, His-77, Glu-99, Glu-102, and His-103.

This sequence belongs to the DtxR/MntR family. As to quaternary structure, homodimer.

It localises to the cytoplasm. Its activity is regulated as follows. DNA binding is strongly activated by Mn(2+). Its function is as follows. Central regulator of manganese homeostasis. The sequence is that of HTH-type transcriptional regulator MntR from Listeria monocytogenes serotype 4b (strain F2365).